A 219-amino-acid chain; its full sequence is Protein P25 (219 aa).

Residues 57 to 62 (KRIRFR) carry the Nuclear localization signal motif. Residues 103–146 (DPTRLDSSVNELLVSNGLVTHYDRVHNVPIHTDGFEVVDFTTVF) form a transcription activation region. Residues 169-178 (VYMVCLVNTV) carry the Nuclear export signal motif.

The protein belongs to the benyvirus P25 protein family. As to quaternary structure, homooligomer.

The protein localises to the host cytoplasm. It localises to the host nucleus. Pathogenicity factor implicated in symptom exacerbation. Might function as transcription activator (Potential). The polypeptide is Protein P25 (Beet necrotic yellow vein virus (isolate Japan/S) (BNYVV)).